Consider the following 660-residue polypeptide: MYASSARDGIPGKWCNARRKQLPLLISKDFPAELYHSLPCKSLENGHIKKVKGVKATLAEAPATPTEKSNSEVPQKKLKVLVAGGGIGGLVFALAGKKRGFDVLVFERDISAIRGEGQYRGPIQIQSNALAALEAIDMDVAEEIMNAGCITGQRINGLVDGISGNWYCKFDTFTPAVERGLPVTRVISRMTLQQILARLQGEDVIMNESHVVNFADDGETVTVNPELCQQYTGDLLVGADGIRSKVRTNLFGPSELTYSGYTCYTGIADFVPADIDTAGYRVFLGHKQYFVSSDVGGGKMQWYAFHNEPAGGVDAPNGKKERLLKIFGGWCDNVIDLSVATDEDAILRRDIYDRPPTFSWGKGRVTLLGDSVHAMQPNLGQGGCMAIEDSYQLALELEKAWSRSAESGSPMDVISSLRSYESARKLRVGVIHGLARMAAIMASAYKAYLGVGLGPLSFITKFRIPHPGRVGGRFFIDLGMPLMLSWVLGGNGEKLEGRIQHCRLSEKANDQLRNWFEDDDALERATDAEWLLLPAGNSNAALETLVLSRDENMPCTIGSVSHANIPGKSVVIPLSQVSDMHARISYNGGAFLGTAFRSDHGTWFIDNEGRRYRVSPNFPMRFHSSDVIVFGSDKAAFRIKAMKFAPKTAAKEDRQAVGAA.

The transit peptide at 1-49 (MYASSARDGIPGKWCNARRKQLPLLISKDFPAELYHSLPCKSLENGHIK) directs the protein to the chloroplast. FAD is bound by residues 79–107 (KVLV…LVFE) and 357–370 (TFSW…LLGD). Positions 545-609 (LVLSRDENMP…HGTWFIDNEG (65 aa)) constitute an FHA domain.

FAD is required as a cofactor.

The protein localises to the plastid. Its subcellular location is the chloroplast membrane. The protein resides in the chloroplast thylakoid membrane. It carries out the reaction all-trans-zeaxanthin + 4 reduced [2Fe-2S]-[ferredoxin] + 2 O2 + 4 H(+) = all-trans-violaxanthin + 4 oxidized [2Fe-2S]-[ferredoxin] + 2 H2O. The enzyme catalyses all-trans-zeaxanthin + 2 reduced [2Fe-2S]-[ferredoxin] + O2 + 2 H(+) = all-trans-antheraxanthin + 2 oxidized [2Fe-2S]-[ferredoxin] + H2O. It catalyses the reaction all-trans-antheraxanthin + 2 reduced [2Fe-2S]-[ferredoxin] + O2 + 2 H(+) = all-trans-violaxanthin + 2 oxidized [2Fe-2S]-[ferredoxin] + H2O. The catalysed reaction is beta-cryptoxanthin + 2 reduced [2Fe-2S]-[ferredoxin] + O2 + 2 H(+) = (5R,6S)-5,6-epoxi-beta-cryptoxanthin + 2 oxidized [2Fe-2S]-[ferredoxin] + H2O. The protein operates within plant hormone biosynthesis; abscisate biosynthesis. Functionally, converts zeaxanthin into antheraxanthin and subsequently violaxanthin. Also acts on beta-cryptoxanthin. Involved in the epoxidation of zeaxanthin. The polypeptide is Zeaxanthin epoxidase, chloroplastic (Capsicum annuum (Capsicum pepper)).